A 587-amino-acid chain; its full sequence is Folylpolyglutamate synthase, mitochondrial (587 aa).

A mitochondrion-targeting transit peptide spans 1–42 (MSRARSHLRAALFLAAASARGITTQVAARRGLSAWPVPQEPS). Residue M43 is modified to N-acetylmethionine. Residue 106 to 109 (GKGS) coordinates ATP. The Mg(2+) site is built by S130, E200, and H228. Residues R363 and D377 each coordinate ATP. The residue at position 539 (S539) is a Phosphoserine.

It belongs to the folylpolyglutamate synthase family. Monomer. The cofactor is K(+). It depends on NH4(+) as a cofactor.

The protein localises to the mitochondrion inner membrane. The protein resides in the mitochondrion matrix. Its subcellular location is the cytoplasm. The enzyme catalyses (6S)-5,6,7,8-tetrahydrofolyl-(gamma-L-Glu)(n) + L-glutamate + ATP = (6S)-5,6,7,8-tetrahydrofolyl-(gamma-L-Glu)(n+1) + ADP + phosphate + H(+). The protein operates within cofactor biosynthesis; tetrahydrofolylpolyglutamate biosynthesis. Activated by 10 mM sodium bicarbonate. Catalyzes conversion of folates to polyglutamate derivatives allowing concentration of folate compounds in the cell and the intracellular retention of these cofactors, which are important substrates for most of the folate-dependent enzymes that are involved in one-carbon transfer reactions involved in purine, pyrimidine and amino acid synthesis. Unsubstituted reduced folates are the preferred substrates. Metabolizes methotrexate (MTX) to polyglutamates. The chain is Folylpolyglutamate synthase, mitochondrial (FPGS) from Homo sapiens (Human).